The sequence spans 673 residues: MAIRGHKGLQQLLSMATSVNSFLGPMKSYKFIFDQITHESILTSSSFRLLENLDLTSAIGQLLNETIQAHHKSYKTGTTTLFFMVGAWSSAVQECLHLGIPVSLIVSVMLDGLNSCIGHVHSLQVSLVSQVTSDCTNIKTNGINHSNYSASGDQGNCSSELENNPLPRVSNMRTASEFPVAFHKKPLPLCTGTNLYKTQRRRLFHSRHLAEDLSFFQDVPERPQTTTLNNETLDGLAKGLAHGYQPVMNLVKNAVCLHCAEIKENSLDKSSFNISRLETCSLPGLSEEHTTVSFGYTTLVPTESAAVITHLNGKPLRILLVDGELTESHRHLGFDNPDNVKMVFEHAGNEKHNLEDSWISRAYEKIIQANINLILVRGDVCPFLLKQCIHRNILIVTQVKQNILQAFSECTGAEPVTYLTQINCCSVGNEAFVTLCTRANSIIEVSQKIVISITAKKLNLITATLSSRIPSTMQSIEDQFLTCAYRLHHALQEGNVFYGGGAIELLCIHHLQKLVQESSSSFYAYDNAQFHCLSSWMTESATFYRAAIIGCLAKGWYKYISVLLCNMGGFLSELDAVTFIENELQNISHHSSPIDYVRDQYSKKDLFNDEMGISISHHSLPVYDNVTPKLEAWRRALHLVLTVLQTDAEVITNSATQNQILMSETSNGEYLFL.

It belongs to the TCP-1 chaperonin family. BBS12 subfamily. In terms of assembly, component of the chaperonin-containing T-complex (TRiC), a heterooligomeric complex of about 850 to 900 kDa that forms two stacked rings, 12 to 16 nm in diameter.

It localises to the cell projection. It is found in the cilium. In terms of biological role, component of the chaperonin-containing T-complex (TRiC), a molecular chaperone complex that assists the folding of proteins upon ATP hydrolysis. This is Chaperonin-containing T-complex member BBS12 (bbs12) from Xenopus laevis (African clawed frog).